The primary structure comprises 39 residues: Ribonuclease UK114 (39 aa).

It belongs to the RutC family. Monomer. In terms of processing, the N-terminus may be blocked. In terms of tissue distribution, mainly expressed in the liver and kidney. Lower expression found in intestine, gizzard, glandular stomach, heart, brain and spleen.

It is found in the cytoplasm. In terms of biological role, endoribonuclease responsible for the inhibition of the translation by cleaving mRNA. Inhibits cell-free protein synthesis. Cleaves phosphodiester bonds only in single-stranded RNA. This is Ribonuclease UK114 from Gallus gallus (Chicken).